Consider the following 465-residue polypeptide: Argininosuccinate lyase (465 aa).

It belongs to the lyase 1 family. Argininosuccinate lyase subfamily.

It is found in the cytoplasm. It carries out the reaction 2-(N(omega)-L-arginino)succinate = fumarate + L-arginine. Its pathway is amino-acid biosynthesis; L-arginine biosynthesis; L-arginine from L-ornithine and carbamoyl phosphate: step 3/3. This is Argininosuccinate lyase from Rhodopseudomonas palustris (strain BisB5).